Here is a 127-residue protein sequence, read N- to C-terminus: Putative truncated L-serine dehydratase YIL168W (127 aa).

Lysine 39 is modified (N6-(pyridoxal phosphate)lysine).

This sequence belongs to the serine/threonine dehydratase family. Requires pyridoxal 5'-phosphate as cofactor.

Its subcellular location is the cytoplasm. The catalysed reaction is L-serine = pyruvate + NH4(+). It participates in carbohydrate biosynthesis; gluconeogenesis. This is Putative truncated L-serine dehydratase YIL168W from Saccharomyces cerevisiae (strain ATCC 204508 / S288c) (Baker's yeast).